Consider the following 174-residue polypeptide: Isomerase prhC (174 aa).

It belongs to the trt14 isomerase family. Homodimer.

The protein operates within secondary metabolite biosynthesis; terpenoid biosynthesis. In terms of biological role, isomerase; part of the gene cluster that mediates the biosynthesis of paraherquonin, a meroterpenoid with a unique, highly congested hexacyclic molecular architecture. The first step of the pathway is the synthesis of 3,5-dimethylorsellinic acid (DMOA) by the polyketide synthase prhL. Synthesis of DMOA is followed by farnesylation by the prenyltransferase prhE, methylesterification by the methyl-transferase prhM, epoxidation of the prenyl chain by the flavin-dependent monooxygenase prhF, and cyclization of the farnesyl moiety by the terpene cyclase prhH, to yield the tetracyclic intermediate, protoaustinoid A. The short chain dehydrogenase prhI then oxidizes the C-3 alcohol group of the terpene cyclase product to transform protoaustinoid A into protoaustinoid B. The FAD-binding monooxygenase prhJ catalyzes the oxidation of protoaustinoid B into preaustinoid A which is further oxidized into preaustinoid A1 by FAD-binding monooxygenase phrK. Finally, prhA leads to berkeleydione via the berkeleyone B intermediate. PrhA is a multifunctional dioxygenase that first desaturates at C5-C6 to form berkeleyone B, followed by rearrangement of the A/B-ring to form the cycloheptadiene moiety in berkeleydione. Berkeleydione serves as the key intermediate for the biosynthesis of paraherquonin as well as many other meroterpenoids. The cytochrome P450 monooxygenases prhB, prhD, and prhN, as well as the isomerase prhC, are probably involved in the late stage of paraherquonin biosynthesis, after the production of berkeleydione. Especially prhC might be a multifunctional enzyme that catalyzes the D-ring expansion via intramolecular methoxy rearrangement, as well as the hydrolysis of the expanded D-ring. This Penicillium brasilianum protein is Isomerase prhC.